Here is a 378-residue protein sequence, read N- to C-terminus: Carbamoyl phosphate synthase small chain (378 aa).

The tract at residues 1-189 (MTKPAILALA…DSHPTIDAAD (189 aa)) is CPSase. L-glutamine contacts are provided by Ser47, Gly241, and Gly243. Residues 193–378 (HVVAFDYGVK…RFTDAMAKRR (186 aa)) enclose the Glutamine amidotransferase type-1 domain. The active-site Nucleophile is Cys269. L-glutamine contacts are provided by Leu270, Gln273, Asn311, Gly313, and Phe314. Catalysis depends on residues His353 and Glu355.

This sequence belongs to the CarA family. Composed of two chains; the small (or glutamine) chain promotes the hydrolysis of glutamine to ammonia, which is used by the large (or ammonia) chain to synthesize carbamoyl phosphate. Tetramer of heterodimers (alpha,beta)4.

It carries out the reaction hydrogencarbonate + L-glutamine + 2 ATP + H2O = carbamoyl phosphate + L-glutamate + 2 ADP + phosphate + 2 H(+). The enzyme catalyses L-glutamine + H2O = L-glutamate + NH4(+). The protein operates within amino-acid biosynthesis; L-arginine biosynthesis; carbamoyl phosphate from bicarbonate: step 1/1. It participates in pyrimidine metabolism; UMP biosynthesis via de novo pathway; (S)-dihydroorotate from bicarbonate: step 1/3. In terms of biological role, small subunit of the glutamine-dependent carbamoyl phosphate synthetase (CPSase). CPSase catalyzes the formation of carbamoyl phosphate from the ammonia moiety of glutamine, carbonate, and phosphate donated by ATP, constituting the first step of 2 biosynthetic pathways, one leading to arginine and/or urea and the other to pyrimidine nucleotides. The small subunit (glutamine amidotransferase) binds and cleaves glutamine to supply the large subunit with the substrate ammonia. The sequence is that of Carbamoyl phosphate synthase small chain from Pseudomonas putida (strain ATCC 47054 / DSM 6125 / CFBP 8728 / NCIMB 11950 / KT2440).